We begin with the raw amino-acid sequence, 722 residues long: Bifunctional UDP-N-acetylglucosamine 2-epimerase/N-acetylmannosamine kinase (722 aa).

Residues R19, S23, R113, H220, and N253 each contribute to the UDP site. The CMP-N-acetyl-beta-neuraminate site is built by K259, E271, K280, and H281. Residues V282, S301, S302, E307, and R321 each contribute to the UDP site. The tract at residues 406-722 (TLSALAVDLG…VLDYTTRRIH (317 aa)) is N-acetylmannosamine kinase. D413 contributes to the Mg(2+) binding site. G416 is an an N-acyl-D-mannosamine 6-phosphate binding site. ADP-binding residues include T417, N418, and R420. An N-acyl-D-mannosamine 6-phosphate contacts are provided by G476, R477, T489, N516, D517, and G545. An N-acyl-D-mannosamine-binding residues include G476, R477, T489, N516, and D517. D517 is a catalytic residue. Residues E566 and H569 each coordinate an N-acyl-D-mannosamine. H569 lines the an N-acyl-D-mannosamine 6-phosphate pocket. Residues H569, C579, C581, and C586 each coordinate Zn(2+). An N-acyl-D-mannosamine 6-phosphate is bound at residue E588. E588 contacts an N-acyl-D-mannosamine.

It in the N-terminal section; belongs to the UDP-N-acetylglucosamine 2-epimerase family. This sequence in the C-terminal section; belongs to the ROK (NagC/XylR) family. Homodimer. Homotetramer. Homohexamer. The hexameric form exhibits both enzyme activities, whereas the dimeric form only catalyzes the phosphorylation of N-acyl-D-mannosamine. Post-translationally, phosphorylated. Phosphorylation by PKC activates the UDP-N-acetylglucosamine 2-epimerase activity. As to expression, widely expressed. Highest expression in liver. Also found at high levels in lung, brain and kidney.

It localises to the cytoplasm. Its subcellular location is the cytosol. It carries out the reaction UDP-N-acetyl-alpha-D-glucosamine + H2O = aldehydo-N-acetyl-D-mannosamine + UDP + H(+). The enzyme catalyses an N-acyl-D-mannosamine + ATP = an N-acyl-D-mannosamine 6-phosphate + ADP + H(+). Its pathway is amino-sugar metabolism; N-acetylneuraminate biosynthesis. Its activity is regulated as follows. The UDP-N-acetylglucosamine 2-epimerase activity, in contrast to the N-acetylmannosamine kinase activity, exhibits allosteric regulation by cytidine monophosphate-N-acetylneuraminic acid (CMP-Neu5Ac), the end product of neuraminic acid biosynthesis. Moreover, the activity is contingent upon the oligomeric state of the enzyme. The monomeric form is inactive, while the dimeric form selectively catalyzes the phosphorylation of N-acetylmannosamine. The hexameric form, on the other hand, demonstrates full proficiency in both enzyme activities. Furthermore, the UDP-N-acetylglucosamine 2-epimerase activity is increased by PKC-mediated phosphorylation. In terms of biological role, bifunctional enzyme that possesses both UDP-N-acetylglucosamine 2-epimerase and N-acetylmannosamine kinase activities, and serves as the initiator of the biosynthetic pathway leading to the production of N-acetylneuraminic acid (NeuAc), a critical precursor in the synthesis of sialic acids. By catalyzing this pivotal and rate-limiting step in sialic acid biosynthesis, this enzyme assumes a pivotal role in governing the regulation of cell surface sialylation, playing a role in embryonic angiogenesis. Sialic acids represent a category of negatively charged sugars that reside on the surface of cells as terminal components of glycoconjugates and mediate important functions in various cellular processes, including cell adhesion, signal transduction, and cellular recognition. This chain is Bifunctional UDP-N-acetylglucosamine 2-epimerase/N-acetylmannosamine kinase, found in Mus musculus (Mouse).